The following is a 152-amino-acid chain: Protein-export protein SecB (152 aa).

This sequence belongs to the SecB family. Homotetramer, a dimer of dimers. One homotetramer interacts with 1 SecA dimer.

It is found in the cytoplasm. Functionally, one of the proteins required for the normal export of preproteins out of the cell cytoplasm. It is a molecular chaperone that binds to a subset of precursor proteins, maintaining them in a translocation-competent state. It also specifically binds to its receptor SecA. The sequence is that of Protein-export protein SecB from Rickettsia felis (strain ATCC VR-1525 / URRWXCal2) (Rickettsia azadi).